Reading from the N-terminus, the 787-residue chain is ATP-dependent zinc metalloprotease FtsH (787 aa).

Over 1 to 5 (MNRKN) the chain is Cytoplasmic. A helical transmembrane segment spans residues 6–26 (VIRMVTAIAVVVLLGWSFFYF). Topologically, residues 27–110 (SDDTRGYKFV…KVTTAVNEGS (84 aa)) are extracellular. Residues 111-131 (ILGELLVYVLPLLLLVGLFVM) form a helical membrane-spanning segment. Residues 132-787 (FSRMQGGARM…VSPSNPPAHG (656 aa)) lie on the Cytoplasmic side of the membrane. An ATP-binding site is contributed by 203–210 (GPPGTGKT). Histidine 425 is a binding site for Zn(2+). Glutamate 426 is a catalytic residue. 2 residues coordinate Zn(2+): histidine 429 and aspartate 501. Residues 616 to 787 (DFGGRIPSDK…VSPSNPPAHG (172 aa)) form a disordered region. Low complexity-rich tracts occupy residues 650–671 (AFKA…AAQS) and 700–709 (YGAPPGWHAP). Positions 710–720 (GWPPQQPPDYW) are enriched in pro residues. Residues 721 to 732 (YPPEQQPSQSPY) show a composition bias toward low complexity. The span at 733 to 762 (WPQPAPSYPGQAPPPYPSYPPCPSYPPPGQ) shows a compositional bias: pro residues.

It in the central section; belongs to the AAA ATPase family. In the C-terminal section; belongs to the peptidase M41 family. As to quaternary structure, homohexamer. The cofactor is Zn(2+).

It is found in the cell membrane. Its function is as follows. Acts as a processive, ATP-dependent zinc metallopeptidase for both cytoplasmic and membrane proteins. Plays a role in the quality control of integral membrane proteins. The sequence is that of ATP-dependent zinc metalloprotease FtsH from Mycobacterium leprae (strain TN).